The chain runs to 125 residues: uncharacterized protein (125 aa).

The region spanning 19–73 is the HTH cro/C1-type domain; sequence IYSLRLAKGLSRQQLAEVIDVTHQQLQKYEKAINRISVGRLVLIAEALDRNIDYF. A DNA-binding region (H-T-H motif) is located at residues 30–49; sequence RQQLAEVIDVTHQQLQKYEK.

This is an uncharacterized protein from Rickettsia conorii (strain ATCC VR-613 / Malish 7).